We begin with the raw amino-acid sequence, 462 residues long: Argininosuccinate lyase (462 aa).

This sequence belongs to the lyase 1 family. Argininosuccinate lyase subfamily.

It is found in the cytoplasm. The catalysed reaction is 2-(N(omega)-L-arginino)succinate = fumarate + L-arginine. It functions in the pathway amino-acid biosynthesis; L-arginine biosynthesis; L-arginine from L-ornithine and carbamoyl phosphate: step 3/3. The polypeptide is Argininosuccinate lyase (Thermus thermophilus (strain ATCC BAA-163 / DSM 7039 / HB27)).